Here is a 645-residue protein sequence, read N- to C-terminus: 1-phosphatidylinositol 4,5-bisphosphate phosphodiesterase zeta-1 (645 aa).

Residues 42–77 enclose the EF-hand domain; that stretch reads CHFAHVKRIFKENDRHNQGRITTEDFRTIYRCIVHR. Residues 162–306 enclose the PI-PLC X-box domain; that stretch reads QDMNKPLNDY…LKFKILVKNK (145 aa). Active-site residues include H177 and H222. In terms of domain architecture, PI-PLC Y-box spans 385-501; that stretch reads LSDLVIYTKA…GYVLKPDFLR (117 aa). The C2 domain maps to 501–625; it reads RDTTLGFNPN…KGYRRVPLFS (125 aa).

As to quaternary structure, interacts via its C2 domain with PtdIns(3)P and, to a lesser extent, PtdIns(5)P in vitro. Ca(2+) serves as cofactor.

It is found in the nucleus. The protein localises to the cytoplasm. Its subcellular location is the perinuclear region. The catalysed reaction is a 1,2-diacyl-sn-glycero-3-phospho-(1D-myo-inositol-4,5-bisphosphate) + H2O = 1D-myo-inositol 1,4,5-trisphosphate + a 1,2-diacyl-sn-glycerol + H(+). Its function is as follows. The production of the second messenger molecules diacylglycerol (DAG) and inositol 1,4,5-trisphosphate (IP3) is mediated by activated phosphatidylinositol-specific phospholipase C enzymes. In vitro, hydrolyzes PtdIns(4,5)P2 in a Ca(2+)-dependent manner. Triggers intracellular Ca(2+) oscillations in oocytes solely during M phase and is involved in inducing oocyte activation and initiating embryonic development up to the blastocyst stage. Is therefore a strong candidate for the egg-activating soluble sperm factor that is transferred from the sperm into the egg cytoplasm following gamete membrane fusion. May exert an inhibitory effect on phospholipase-C-coupled processes that depend on calcium ions and protein kinase C, including CFTR trafficking and function. The sequence is that of 1-phosphatidylinositol 4,5-bisphosphate phosphodiesterase zeta-1 from Rattus norvegicus (Rat).